A 428-amino-acid polypeptide reads, in one-letter code: Cyclin-B1-1 (428 aa).

This sequence belongs to the cyclin family. Cyclin AB subfamily. In terms of assembly, interacts with FZR2/CCS52A1, FZR1/CCS52A2 and FZR3/CCS52B. As to expression, expressed in root tip, lateral root apex, shoot apex, leaf primordia, axillary buds, stamen and petal primordia, ovules and developing embryo.

The protein localises to the nucleus. This chain is Cyclin-B1-1 (CYCB1-1), found in Arabidopsis thaliana (Mouse-ear cress).